The following is a 410-amino-acid chain: Acetate kinase (410 aa).

Asn-7 serves as a coordination point for Mg(2+). Lys-14 contributes to the ATP binding site. Arg-88 provides a ligand contact to substrate. Residue Asp-145 is the Proton donor/acceptor of the active site. Residues His-203 to Gly-207, Asp-278 to Arg-280, and Gly-326 to Asn-330 contribute to the ATP site. Glu-379 contacts Mg(2+).

The protein belongs to the acetokinase family. As to quaternary structure, homodimer. Requires Mg(2+) as cofactor. Mn(2+) is required as a cofactor.

It localises to the cytoplasm. It carries out the reaction acetate + ATP = acetyl phosphate + ADP. Its pathway is metabolic intermediate biosynthesis; acetyl-CoA biosynthesis; acetyl-CoA from acetate: step 1/2. Catalyzes the formation of acetyl phosphate from acetate and ATP. Can also catalyze the reverse reaction. The polypeptide is Acetate kinase (Chlorante-Aster yellows phytoplasma).